We begin with the raw amino-acid sequence, 271 residues long: Probable L,D-transpeptidase 3 (271 aa).

The 144-residue stretch at 127–270 (VVGVASISQH…VDIGDPVIVQ (144 aa)) folds into the L,D-TPase catalytic domain. His-228 acts as the Proton donor/acceptor in catalysis. Cys-246 (nucleophile) is an active-site residue.

It functions in the pathway cell wall biogenesis; peptidoglycan biosynthesis. Is irreversibly inactivated by the beta-lactam carbapenems via the formation of a covalent adduct resulting from acylation of the catalytic Cys. Imipenem is the most efficient drug for in vitro LdtMt3/Rv1433 inactivation. Probable L,D-transpeptidase that may perform as-yet-unknown cross-linking reactions in M.tuberculosis. Is not able to generate 3-&gt;3 cross-links in peptidoglycan, using tetrapeptide stems as acyl donor substrates. May function in the anchoring of proteins to peptidoglycan. This Mycobacterium tuberculosis (strain ATCC 25618 / H37Rv) protein is Probable L,D-transpeptidase 3.